The primary structure comprises 196 residues: uncharacterized protein (196 aa).

CBS domains follow at residues 10-69 (ARRD…NPDE) and 76-132 (MSQP…LVAT). In terms of domain architecture, ACP-type MB spans 153–187 (IIEGVCDLCETYSEELRFVDGVWVCPECYEDILGR). Fe cation is bound by residues Cys-158, Cys-161, Cys-177, and Cys-180. Residues Cys-158, Cys-161, Cys-177, and Cys-180 each coordinate Zn(2+).

This is an uncharacterized protein from Methanopyrus kandleri (strain AV19 / DSM 6324 / JCM 9639 / NBRC 100938).